The primary structure comprises 779 residues: Endonuclease MutS2 (779 aa).

ATP is bound at residue 328–335; the sequence is GPNTGGKT. In terms of domain architecture, Smr spans 704-779; that stretch reads LDLRGKRYEE…GSGATIVTLG (76 aa).

Belongs to the DNA mismatch repair MutS family. MutS2 subfamily. Homodimer. Binds to stalled ribosomes, contacting rRNA.

Endonuclease that is involved in the suppression of homologous recombination and thus may have a key role in the control of bacterial genetic diversity. In terms of biological role, acts as a ribosome collision sensor, splitting the ribosome into its 2 subunits. Detects stalled/collided 70S ribosomes which it binds and splits by an ATP-hydrolysis driven conformational change. Acts upstream of the ribosome quality control system (RQC), a ribosome-associated complex that mediates the extraction of incompletely synthesized nascent chains from stalled ribosomes and their subsequent degradation. Probably generates substrates for RQC. In Streptococcus agalactiae serotype Ia (strain ATCC 27591 / A909 / CDC SS700), this protein is Endonuclease MutS2.